The primary structure comprises 959 residues: MRVRGGQEAAQDKETSLDSDEERGRRGLRQTTLLDYMAGPAKPKKPEPPPTLHREREPESKYQNTLPETTGKEPASMSLRRNQPSSKHEEYNSESGDVRGLTLEPSPQSELSDDDVILELVREPWVESVRGYLLDVRYDGSLGKAVLMLYDPSSGSLVKWADRTGHKPYFLTDARPEDLRAAGVDVSHDESFLQYDLVEKFHPIDRKLVKLTKIVVSDPLAVRRLREKVSSAGFSVWEADIKYHHNYIFDRQLIPGILYEVGGVRIVHTLPLEMDDATRIVDEIFREEPREVRERAREWLRIFEAPPPKLPLIAFDIEVYSPIATRLPDPSTAPYPVISAATADSSGRSRVVLLYRDGVEFTEGALPEGTEVEIYDSERAMLLDLVRILQRYPLVVSFNGDNFDLPYIARRLEVLGVPREFAPIELKQDYATFRRSLHIDLHKLFGIRALQVYAFGNKYRELSLESISRALLGKGKVELKAPVSELNLNKLIEYNLQDARLTLELLTFSNNLVFNLIIMVMRTSKLGIEDITRSQISNWIRGLMYWEHRRRRWLIPSRGEIEKLSSAGARVGAIIKDKKYRGAIVLDPPVGIFFRVLVLDFASLYPSLIKQWNLSYETVNNPNCRDTIEVPEVGHRVCREFKGISNEIVGMLRDFRVRLYKKKSKDKSLREEERLWYDVVQSAMKVYINASYGVFGSEKFSLYSLPVAESVTALGRAVLRGTLEKSRELNLHIVYGDTDSLFIWDPPKDVLNDLVDYVERTYGLELELDKVFRAILFSGLKKNYLGITEEGDIVIKGMVAKKSNTPEFIKDEFSKAVKILSKLEKPEDVEAILAELRDHINTVYNNVKKKVYTLDQFAIKVMLSKNPREYDKNTPQHVKAAMLLQRLGLTLSRGDIVYYVKTRDKLGVKPVQLARLSDVDPGKYVEHVKTAFEQMLMAFGISWDDISGVRKLDRLLFDS.

The segment at 1–110 is disordered; it reads MRVRGGQEAA…LTLEPSPQSE (110 aa). Positions 44–60 are enriched in basic and acidic residues; sequence KKPEPPPTLHREREPES.

This sequence belongs to the DNA polymerase type-B family.

It catalyses the reaction DNA(n) + a 2'-deoxyribonucleoside 5'-triphosphate = DNA(n+1) + diphosphate. The polypeptide is DNA polymerase 1 (polA) (Aeropyrum pernix (strain ATCC 700893 / DSM 11879 / JCM 9820 / NBRC 100138 / K1)).